The chain runs to 149 residues: Transcription antitermination protein NusB (149 aa).

This sequence belongs to the NusB family.

Its function is as follows. Involved in transcription antitermination. Required for transcription of ribosomal RNA (rRNA) genes. Binds specifically to the boxA antiterminator sequence of the ribosomal RNA (rrn) operons. The polypeptide is Transcription antitermination protein NusB (Chromobacterium violaceum (strain ATCC 12472 / DSM 30191 / JCM 1249 / CCUG 213 / NBRC 12614 / NCIMB 9131 / NCTC 9757 / MK)).